The primary structure comprises 268 residues: Ribosomal RNA small subunit methyltransferase A (268 aa).

S-adenosyl-L-methionine is bound by residues Asn12, Leu14, Gly38, Glu59, Asp82, and Asn107.

Belongs to the class I-like SAM-binding methyltransferase superfamily. rRNA adenine N(6)-methyltransferase family. RsmA subfamily.

The protein localises to the cytoplasm. It carries out the reaction adenosine(1518)/adenosine(1519) in 16S rRNA + 4 S-adenosyl-L-methionine = N(6)-dimethyladenosine(1518)/N(6)-dimethyladenosine(1519) in 16S rRNA + 4 S-adenosyl-L-homocysteine + 4 H(+). Specifically dimethylates two adjacent adenosines (A1518 and A1519) in the loop of a conserved hairpin near the 3'-end of 16S rRNA in the 30S particle. May play a critical role in biogenesis of 30S subunits. The sequence is that of Ribosomal RNA small subunit methyltransferase A from Aster yellows witches'-broom phytoplasma (strain AYWB).